The chain runs to 227 residues: Thymidylate kinase (227 aa).

16–23 (GIDGAGKT) contacts ATP.

The protein belongs to the thymidylate kinase family.

It catalyses the reaction dTMP + ATP = dTDP + ADP. Phosphorylation of dTMP to form dTDP in both de novo and salvage pathways of dTTP synthesis. This is Thymidylate kinase from Xanthomonas campestris pv. campestris (strain 8004).